The primary structure comprises 613 residues: Zinc metalloproteinase-disintegrin-like VMP-III (613 aa).

The N-terminal stretch at 1-20 is a signal peptide; that stretch reads MIQVLLVTLCLAAFPYQGSS. Positions 21-190 are excised as a propeptide; it reads IILDSGNVND…KKASQLVVTP (170 aa). Positions 200–396 constitute a Peptidase M12B domain; that stretch reads KYIELVIVAD…NRPPCILNKP (197 aa). Residue glutamate 203 coordinates Ca(2+). The N-linked (GlcNAc...) asparagine glycan is linked to asparagine 219. A Ca(2+)-binding site is contributed by aspartate 287. Intrachain disulfides connect cysteine 311/cysteine 391, cysteine 351/cysteine 375, and cysteine 353/cysteine 358. Residue histidine 336 coordinates Zn(2+). The active site involves glutamate 337. Zn(2+) contacts are provided by histidine 340 and histidine 346. Ca(2+) contacts are provided by cysteine 391, asparagine 394, valine 406, asparagine 409, phenylalanine 411, glutamate 413, glutamate 416, and aspartate 419. Residues 404–490 form the Disintegrin domain; the sequence is PPVCGNYFVE…ECPTDDFQRN (87 aa). 14 disulfide bridges follow: cysteine 407-cysteine 436, cysteine 418-cysteine 431, cysteine 420-cysteine 426, cysteine 430-cysteine 453, cysteine 444-cysteine 450, cysteine 449-cysteine 475, cysteine 462-cysteine 482, cysteine 469-cysteine 501, cysteine 494-cysteine 506, cysteine 513-cysteine 563, cysteine 528-cysteine 574, cysteine 541-cysteine 551, cysteine 558-cysteine 600, and cysteine 594-cysteine 606. The short motif at 468 to 470 is the D/ECD-tripeptide element; that stretch reads ECD. Asparagine 503 carries N-linked (GlcNAc...) asparagine glycosylation.

Belongs to the venom metalloproteinase (M12B) family. P-III subfamily. P-IIIa sub-subfamily. As to quaternary structure, monomer. Requires Zn(2+) as cofactor. Expressed by the venom gland.

It localises to the secreted. Functionally, snake venom metalloproteinase that impairs hemostasis in the envenomed animal. The protein is Zinc metalloproteinase-disintegrin-like VMP-III of Agkistrodon piscivorus leucostoma (Western cottonmouth).